Reading from the N-terminus, the 251-residue chain is tRNA pseudouridine synthase A (251 aa).

D26 (nucleophile) is an active-site residue. A substrate-binding site is contributed by Y98.

It belongs to the tRNA pseudouridine synthase TruA family. In terms of assembly, homodimer.

It catalyses the reaction uridine(38/39/40) in tRNA = pseudouridine(38/39/40) in tRNA. Formation of pseudouridine at positions 38, 39 and 40 in the anticodon stem and loop of transfer RNAs. The chain is tRNA pseudouridine synthase A from Mycolicibacterium paratuberculosis (strain ATCC BAA-968 / K-10) (Mycobacterium paratuberculosis).